The primary structure comprises 95 residues: Defensin-1 (95 aa).

A signal peptide spans 1 to 19 (MKIYFIVGLLFMAMVAIMA). Positions 20 to 43 (APVEDEFEPLEHFENEERADRHRR) are excised as a propeptide. 3 disulfides stabilise this stretch: Cys46/Cys74, Cys60/Cys79, and Cys64/Cys81. A Phenylalanine amide modification is found at Phe94.

The protein resides in the secreted. Found in royal jelly and in hemolymph, potent antibacterial protein against Gram-positive bacteria at low concentration. The sequence is that of Defensin-1 from Apis mellifera carnica (Carniolan honeybee).